We begin with the raw amino-acid sequence, 156 residues long: Enhancer of split M1 protein (156 aa).

The N-terminal stretch at 1–19 (MMSQTLTLCCLALVACVYG) is a signal peptide. Kazal-like domains are found at residues 23 to 81 (STND…AWCS) and 96 to 156 (KLEV…EEKC). Disulfide bonds link Cys29–Cys62, Cys33–Cys55, Cys102–Cys135, Cys106–Cys128, and Cys114–Cys156.

In Drosophila melanogaster (Fruit fly), this protein is Enhancer of split M1 protein (Kaz-m1).